Reading from the N-terminus, the 230-residue chain is UPF0173 metal-dependent hydrolase SPO2976 (230 aa).

It belongs to the UPF0173 family.

The sequence is that of UPF0173 metal-dependent hydrolase SPO2976 from Ruegeria pomeroyi (strain ATCC 700808 / DSM 15171 / DSS-3) (Silicibacter pomeroyi).